An 879-amino-acid polypeptide reads, in one-letter code: Exocyst complex component 1 (879 aa).

The interval 29–94 (SQYSESEYDP…ATSLGNNDGD (66 aa)) is disordered. A compositionally biased stretch (basic and acidic residues) spans 40 to 52 (ETTHSESDSENHH). Polar residues predominate over residues 64 to 76 (FLSQSNDNVSNGP). The segment covering 77-91 (SNNTLSSSATSLGNN) has biased composition (low complexity). 2 coiled-coil regions span residues 165 to 187 (YNKQLQDMKKYIEHIEGKNNKME) and 226 to 248 (KGLKMAIEAAEDLKRALTTKLKS). 2 disordered regions span residues 371–413 (QNDF…GKDG) and 455–557 (GQRN…PDAP). A compositionally biased stretch (low complexity) spans 373-409 (DFFSSSSSSKKSIDSLNNNTSTSTPSKNSSSSSSSSS). Basic residues predominate over residues 480–500 (KKSSKKDKKDKKDKKDKKDKK). Polar residues predominate over residues 519–532 (DSNSPKSPNNAVNG). Pro residues predominate over residues 541–551 (SPPPPPPPPPK).

This sequence belongs to the SEC3 family. As to quaternary structure, the exocyst complex is composed of sec3/exoc1, sec5/exoc2, sec6/exoc3, sec8/exoc4, sec10/exoc5, sec15/exoc6, exo70/exoc7 and exo84/exoc8.

Its subcellular location is the midbody. It localises to the midbody ring. Functionally, component of the exocyst complex involved in the docking of exocytic vesicles with fusion sites on the plasma membrane. The polypeptide is Exocyst complex component 1 (exoc1) (Dictyostelium discoideum (Social amoeba)).